The primary structure comprises 399 residues: Chorismate synthase (399 aa).

Positions 40 and 46 each coordinate NADP(+). FMN is bound by residues 135–137 (RAS), 256–257 (QA), Gly-301, 316–320 (KPIAT), and Arg-342.

It belongs to the chorismate synthase family. In terms of assembly, homotetramer. Requires FMNH2 as cofactor.

It carries out the reaction 5-O-(1-carboxyvinyl)-3-phosphoshikimate = chorismate + phosphate. It participates in metabolic intermediate biosynthesis; chorismate biosynthesis; chorismate from D-erythrose 4-phosphate and phosphoenolpyruvate: step 7/7. Catalyzes the anti-1,4-elimination of the C-3 phosphate and the C-6 proR hydrogen from 5-enolpyruvylshikimate-3-phosphate (EPSP) to yield chorismate, which is the branch point compound that serves as the starting substrate for the three terminal pathways of aromatic amino acid biosynthesis. This reaction introduces a second double bond into the aromatic ring system. This Arthrobacter sp. (strain FB24) protein is Chorismate synthase.